We begin with the raw amino-acid sequence, 155 residues long: Vasotocin-neurophysin VT 1 (155 aa).

Residues methionine 1–alanine 20 form the signal peptide. The cysteines at positions 21 and 26 are disulfide-linked. Glycine 29 carries the post-translational modification Glycine amide. 7 cysteine pairs are disulfide-bonded: cysteine 41/cysteine 85, cysteine 44/cysteine 58, cysteine 52/cysteine 75, cysteine 59/cysteine 65, cysteine 92/cysteine 105, cysteine 99/cysteine 117, and cysteine 106/cysteine 111.

Belongs to the vasopressin/oxytocin family. Seven disulfide bonds are present in neurophysin.

The protein localises to the secreted. Functionally, vasotocin is probably an antidiuretic hormone. The protein is Vasotocin-neurophysin VT 1 of Oncorhynchus masou (Cherry salmon).